Consider the following 634-residue polypeptide: Putative peptidoglycan O-acetyltransferase YrhL (634 aa).

Helical transmembrane passes span 10–30 (YIPG…TYHL), 38–58 (GFIG…SILL), 79–99 (RLLP…VLFD), 110–130 (AISS…LSYF), 145–165 (LAIE…GMYI), 172–192 (LAAV…VLYE), 244–264 (FLAF…EPFL), 270–290 (LFIS…SSFL), 307–327 (YGIY…QEIG), 329–349 (PVFW…ELSY), and 385–405 (MSIG…SGLA). The tract at residues 413–481 (KWTYSSQETN…SQQLKKPADT (69 aa)) is disordered. Over residues 414–429 (WTYSSQETNADTSQAS) the composition is skewed to polar residues. Composition is skewed to basic and acidic residues over residues 430 to 447 (GDKK…EQKT) and 455 to 470 (KENK…KKDT).

Belongs to the acyltransferase 3 family.

It localises to the cell membrane. The sequence is that of Putative peptidoglycan O-acetyltransferase YrhL (yrhL) from Bacillus subtilis (strain 168).